Consider the following 323-residue polypeptide: Fructose-1,6-bisphosphatase class 1 (323 aa).

The Mg(2+) site is built by E88, D107, L109, and D110. Residues 110–113 (DGSS) and N200 each bind substrate. Mg(2+) is bound at residue E272.

Belongs to the FBPase class 1 family. In terms of assembly, homotetramer. The cofactor is Mg(2+).

The protein localises to the cytoplasm. The catalysed reaction is beta-D-fructose 1,6-bisphosphate + H2O = beta-D-fructose 6-phosphate + phosphate. It participates in carbohydrate biosynthesis; gluconeogenesis. This Acinetobacter baumannii (strain ACICU) protein is Fructose-1,6-bisphosphatase class 1.